The following is a 430-amino-acid chain: Histidine--tRNA ligase (430 aa).

Belongs to the class-II aminoacyl-tRNA synthetase family.

It localises to the cytoplasm. It catalyses the reaction tRNA(His) + L-histidine + ATP = L-histidyl-tRNA(His) + AMP + diphosphate + H(+). The chain is Histidine--tRNA ligase from Metallosphaera sedula (strain ATCC 51363 / DSM 5348 / JCM 9185 / NBRC 15509 / TH2).